The sequence spans 578 residues: Trehalase (578 aa).

Positions 1-19 (MPGSTWELHLLLLLGLGLG) are cleaved as a signal peptide. A glycan (N-linked (GlcNAc...) asparagine) is linked at Asn78. Residues Arg168, 175 to 176 (WD), Asn212, and 221 to 223 (RSQ) each bind substrate. An N-linked (GlcNAc...) asparagine glycan is attached at Asn261. Substrate contacts are provided by residues 286-288 (RPE) and Gly319. Asp321 serves as the catalytic Proton donor/acceptor. Residue Asn369 is glycosylated (N-linked (GlcNAc...) asparagine). Glu514 (proton donor/acceptor) is an active-site residue. Residue Glu528 coordinates substrate. Ser555 carries GPI-anchor amidated serine lipidation. Residues 556–578 (GTQLALLEPHCLAAALLLSFLTR) constitute a propeptide, removed in mature form.

This sequence belongs to the glycosyl hydrolase 37 family. In terms of assembly, homodimer; disulfide-linked. In terms of tissue distribution, expressed in small intestine, kidney, and to a lesser extent in liver.

It localises to the cell membrane. It catalyses the reaction alpha,alpha-trehalose + H2O = alpha-D-glucose + beta-D-glucose. Intestinal trehalase is probably involved in the hydrolysis of ingested trehalose. This chain is Trehalase (TREH), found in Oryctolagus cuniculus (Rabbit).